The chain runs to 447 residues: N-succinylarginine dihydrolase (447 aa).

Residues 19-28, Asn-110, and 137-138 contribute to the substrate site; these read AGLSFGNEAS and HR. The active site involves Glu-174. Position 212 (Arg-212) interacts with substrate. His-248 is an active-site residue. Substrate contacts are provided by Asp-250 and Asn-359. Catalysis depends on Cys-365, which acts as the Nucleophile.

The protein belongs to the succinylarginine dihydrolase family. Homodimer.

It carries out the reaction N(2)-succinyl-L-arginine + 2 H2O + 2 H(+) = N(2)-succinyl-L-ornithine + 2 NH4(+) + CO2. The protein operates within amino-acid degradation; L-arginine degradation via AST pathway; L-glutamate and succinate from L-arginine: step 2/5. Functionally, catalyzes the hydrolysis of N(2)-succinylarginine into N(2)-succinylornithine, ammonia and CO(2). This is N-succinylarginine dihydrolase from Escherichia coli O6:H1 (strain CFT073 / ATCC 700928 / UPEC).